Consider the following 289-residue polypeptide: tRNA pseudouridine synthase B (289 aa).

Residue Asp38 is the Nucleophile of the active site.

The protein belongs to the pseudouridine synthase TruB family. Type 1 subfamily.

It catalyses the reaction uridine(55) in tRNA = pseudouridine(55) in tRNA. Functionally, responsible for synthesis of pseudouridine from uracil-55 in the psi GC loop of transfer RNAs. This Clostridium tetani (strain Massachusetts / E88) protein is tRNA pseudouridine synthase B.